A 41-amino-acid polypeptide reads, in one-letter code: Disintegrin viperistatin (41 aa).

Intrachain disulfides connect C1/C10, C6/C29, C7/C34, and C19/C36. A Disintegrin domain is found at 1–41; it reads CTTGPCCRQCKLKPAGTTCWKTSRTSHYCTGKSCDCPVYQG. The Cell attachment site; atypical (KTS) motif lies at 21-23; that stretch reads KTS.

Monomer. As to expression, expressed by the venom gland.

It is found in the secreted. Functionally, potent and highly selective inhibitor of alpha-1/beta-1 (ITGA1/ITGB1) integrin binding to collagen I and IV. Is about 25-fold more potent than obtustatin inhibiting the binding of this integrin to collagen IV. This is Disintegrin viperistatin from Daboia palaestinae (Palestine viper).